The sequence spans 418 residues: Gamma-glutamyl phosphate reductase (418 aa).

Belongs to the gamma-glutamyl phosphate reductase family.

Its subcellular location is the cytoplasm. It carries out the reaction L-glutamate 5-semialdehyde + phosphate + NADP(+) = L-glutamyl 5-phosphate + NADPH + H(+). It participates in amino-acid biosynthesis; L-proline biosynthesis; L-glutamate 5-semialdehyde from L-glutamate: step 2/2. Catalyzes the NADPH-dependent reduction of L-glutamate 5-phosphate into L-glutamate 5-semialdehyde and phosphate. The product spontaneously undergoes cyclization to form 1-pyrroline-5-carboxylate. This is Gamma-glutamyl phosphate reductase from Histophilus somni (strain 129Pt) (Haemophilus somnus).